Reading from the N-terminus, the 512-residue chain is MQLLTLPTLIFIFLNYGTPCLSLRILVYSPRMIPSHVAFVANIANLLGQRGHNVVVVDNVLRSDISNKLDLKVIEKVVKVETSANVAKLLADQSIPINFWSMRNEPEEQKKVMKQLGIIFLEQCKYLVSKEETVFNELKHLEFDFGIHEVFDICGIGIFEKLGIRKSVILSSTGMRDIVNEALGISSQLQDASILSDYGNSIPFYGIRRNLKFHSAWRNFFEVQSKTLEPLFETTSSFENLLRFSNLMFLNTHELADAHRPWSRRVHEIGGISFKFPMPLKNEYINLFNKYNSIILVSFGTTTPSFLMPEKYKNTLINTFQRFPDFLFIWKYEKDDEFTQKNKKGNVVFKKFLPQVDLLESRKIKLFITHGGQNSLLETFHSNTRTLITPLFGDQHRNAQIALENGLSHVLLKDQLANEELVYAAIKQGTESNKKLDDNLLKLSSNLKNAKQTSENLFLDTVESTYTDNLSPLNFEFYPKLYSSDQILLYLDSIAMFTLTLLTMILIRKFLL.

The N-terminal stretch at Met-1–Ser-22 is a signal peptide. A helical membrane pass occupies residues Ile-487–Ile-507.

It belongs to the UDP-glycosyltransferase family.

It localises to the membrane. The enzyme catalyses glucuronate acceptor + UDP-alpha-D-glucuronate = acceptor beta-D-glucuronoside + UDP + H(+). This chain is Putative UDP-glucuronosyltransferase ugt-55 (ugt-55), found in Caenorhabditis elegans.